The sequence spans 972 residues: DNA cross-link repair 1A protein (972 aa).

The segment at 14–80 (YKSIRKRKPQ…SEDLDPCKDD (67 aa)) is disordered. Over residues 23–37 (QSNPDSTSVSMQTVT) the composition is skewed to polar residues. Basic residues predominate over residues 39-54 (GKCRPKRKGSGNRKKS). Basic and acidic residues predominate over residues 64 to 80 (SEQRLRPSEDLDPCKDD). The UBZ4-type zinc-finger motif lies at 105 to 135 (DGYCPSCQMPFSLLVVQTPRWHVAECLDTPG). The Zn(2+) site is built by Cys-108, Cys-111, His-126, and Cys-130. Disordered regions lie at residues 191–219 (KSSCFPSPVEDSQAEKPSKNLKNVPNNEC) and 552–623 (GEAC…TTDE). Polar residues predominate over residues 210-219 (NLKNVPNNEC).

The protein belongs to the DNA repair metallo-beta-lactamase (DRMBL) family. Binds PIAS1.

Its subcellular location is the nucleus. It catalyses the reaction a beta-lactam + H2O = a substituted beta-amino acid. Functionally, may be required for DNA interstrand cross-link repair. The protein is DNA cross-link repair 1A protein (DCLRE1A) of Gallus gallus (Chicken).